Consider the following 318-residue polypeptide: L-lactate dehydrogenase (318 aa).

NAD(+) contacts are provided by residues Val-18, Asp-39, Lys-44, Tyr-69, and 83-84 (GA). Substrate contacts are provided by Gln-86 and Arg-92. NAD(+) is bound by residues Ser-105, 122–124 (VSN), and Ser-147. 124–127 (NPVD) contributes to the substrate binding site. 152–155 (DTSR) lines the substrate pocket. The active-site Proton acceptor is the His-179. Tyr-225 is modified (phosphotyrosine). Thr-234 provides a ligand contact to substrate.

This sequence belongs to the LDH/MDH superfamily. LDH family. As to quaternary structure, homotetramer.

It localises to the cytoplasm. It catalyses the reaction (S)-lactate + NAD(+) = pyruvate + NADH + H(+). Its pathway is fermentation; pyruvate fermentation to lactate; (S)-lactate from pyruvate: step 1/1. Catalyzes the conversion of lactate to pyruvate. This Clostridium botulinum (strain Loch Maree / Type A3) protein is L-lactate dehydrogenase.